A 485-amino-acid polypeptide reads, in one-letter code: Ribulose bisphosphate carboxylase large chain (485 aa).

A propeptide spanning residues 1–2 is cleaved from the precursor; the sequence is MS. Residue proline 3 is modified to N-acetylproline. Residue lysine 14 is modified to N6,N6,N6-trimethyllysine. Asparagine 123 and threonine 173 together coordinate substrate. Lysine 175 acts as the Proton acceptor in catalysis. A substrate-binding site is contributed by lysine 177. Residues lysine 201, aspartate 203, and glutamate 204 each coordinate Mg(2+). Lysine 201 carries the post-translational modification N6-carboxylysine. The Proton acceptor role is filled by histidine 294. Residues arginine 295, histidine 327, and serine 379 each contribute to the substrate site.

Belongs to the RuBisCO large chain family. Type I subfamily. Heterohexadecamer of 8 large chains and 8 small chains; disulfide-linked. The disulfide link is formed within the large subunit homodimers. Mg(2+) is required as a cofactor. The disulfide bond which can form in the large chain dimeric partners within the hexadecamer appears to be associated with oxidative stress and protein turnover.

The protein localises to the plastid. The protein resides in the chloroplast. The catalysed reaction is 2 (2R)-3-phosphoglycerate + 2 H(+) = D-ribulose 1,5-bisphosphate + CO2 + H2O. The enzyme catalyses D-ribulose 1,5-bisphosphate + O2 = 2-phosphoglycolate + (2R)-3-phosphoglycerate + 2 H(+). In terms of biological role, ruBisCO catalyzes two reactions: the carboxylation of D-ribulose 1,5-bisphosphate, the primary event in carbon dioxide fixation, as well as the oxidative fragmentation of the pentose substrate in the photorespiration process. Both reactions occur simultaneously and in competition at the same active site. This is Ribulose bisphosphate carboxylase large chain from Bartlettina sordida (Purple torch).